The sequence spans 256 residues: Zinc import ATP-binding protein ZnuC (256 aa).

One can recognise an ABC transporter domain in the interval 6-221; the sequence is IAAEGLSIRV…PEYRALFGTG (216 aa). Position 38-45 (38-45) interacts with ATP; the sequence is GPNGSGKS. Positions 237–256 are disordered; it reads HDDDCGHDHGAEHMHPHGDR.

This sequence belongs to the ABC transporter superfamily. Zinc importer (TC 3.A.1.15.5) family. In terms of assembly, the complex is composed of two ATP-binding proteins (ZnuC), two transmembrane proteins (ZnuB) and a solute-binding protein (ZnuA).

Its subcellular location is the cell inner membrane. The enzyme catalyses Zn(2+)(out) + ATP(in) + H2O(in) = Zn(2+)(in) + ADP(in) + phosphate(in) + H(+)(in). In terms of biological role, part of the ABC transporter complex ZnuABC involved in zinc import. Responsible for energy coupling to the transport system. In Ruegeria pomeroyi (strain ATCC 700808 / DSM 15171 / DSS-3) (Silicibacter pomeroyi), this protein is Zinc import ATP-binding protein ZnuC.